The following is a 691-amino-acid chain: MNDSNSLLITRLAAQILSRNMQTVDVIVDDKTLSLEEKIDTLTSMVLAVNSPPQSPPRVTSSDLAASIIKNNSKMVGNDFEMRYNVLRMAVVFVKHYPKYYNETTAGLVAEIESNLLQYQNYVNQGNYQNIEGYDSLLNKAEECYVKIDRLFKESIKKIMDDTEAFEREQEAERLRAEQTAANALLERRAQTSADDVVNRADANIPTAFSDPLPGPSAPRYMYESSESDTYMETARRTAEHYTDQDKDYNAAYTADEYNSLVKTVLLRLIEKALATLKNRLHITTIDQLKKFRDYLNSDADAGEFQIFLNQEDCVILKNLSNLASKFFNVRCVADTLEVMLEALRNNIELVQPESDAVRRIVIKMTQEIKDSSTPLYNIAMYKSDYDAIKNKNIKTLFDLYNDRLPINFLDTSATSPVRKTSGKRSAEDDLLPTRSSKRANRPEINVISSEDEQEDDDVEDVDYEKESKRRKLEDEDFLKLKALEFSKDIVNEKLQKIIVVTDGMKRLYEYCNCKNSLETLPSAANYGSLLKRLNLYNLDHIEMNVNFYELLFPLTLYNDNDNSDKTLSHQLVNYIFLASNYFQNCAKNFNYMRETFNVFGPFKQIDFMVMFVIKFNFLCDMRNFAKLIDELVPNKQPNMRIHSVLVMRDKIVKLAFSNLQFQTFSKKDKSRNTKHLQRLIMLMNANYNVI.

Residues 416–466 (SPVRKTSGKRSAEDDLLPTRSSKRANRPEINVISSEDEQEDDDVEDVDYEK) are disordered. Residues 450-464 (SEDEQEDDDVEDVDY) show a composition bias toward acidic residues.

As to quaternary structure, homodimer. Interacts with host nuclear F-actin.

Its subcellular location is the host nucleus. It is found in the virion. Its function is as follows. Structural protein that plays a role in the packaging of nucleocapsids and in their egress from the nucleus toward the cell periphery. The sequence is that of Capsid-associated protein VP80 (VP80) from Autographa californica nuclear polyhedrosis virus (AcMNPV).